Reading from the N-terminus, the 149-residue chain is Calmodulin-2 (149 aa).

Residue Ala2 is modified to N-acetylalanine. 4 EF-hand domains span residues 8 to 43, 44 to 79, 81 to 116, and 117 to 149; these read EQIA…LGQN, PTEG…KMKD, DSEE…PGEK, and LTDE…MTSK. Residues Asp21, Asp23, Asn25, Asn27, Glu32, Asp57, Asp59, Asn61, Thr63, Glu68, Asp94, Asp96, Asn98, and Glu105 each coordinate Ca(2+). At Lys116 the chain carries N6,N6,N6-trimethyllysine. Positions 130, 132, 134, 136, and 141 each coordinate Ca(2+).

It belongs to the calmodulin family.

In terms of biological role, calmodulin mediates the control of a large number of enzymes, ion channels and other proteins by Ca(2+). Among the enzymes to be stimulated by the calmodulin-Ca(2+) complex are a number of protein kinases and phosphatases. In Branchiostoma floridae (Florida lancelet), this protein is Calmodulin-2 (CAM2).